The following is a 284-amino-acid chain: Bifunctional protein FolD (284 aa).

Residues 166-168 (GAS), Ser-191, and Ile-232 contribute to the NADP(+) site.

Belongs to the tetrahydrofolate dehydrogenase/cyclohydrolase family. In terms of assembly, homodimer.

It carries out the reaction (6R)-5,10-methylene-5,6,7,8-tetrahydrofolate + NADP(+) = (6R)-5,10-methenyltetrahydrofolate + NADPH. It catalyses the reaction (6R)-5,10-methenyltetrahydrofolate + H2O = (6R)-10-formyltetrahydrofolate + H(+). Its pathway is one-carbon metabolism; tetrahydrofolate interconversion. Its function is as follows. Catalyzes the oxidation of 5,10-methylenetetrahydrofolate to 5,10-methenyltetrahydrofolate and then the hydrolysis of 5,10-methenyltetrahydrofolate to 10-formyltetrahydrofolate. This chain is Bifunctional protein FolD, found in Neisseria gonorrhoeae (strain ATCC 700825 / FA 1090).